Here is a 726-residue protein sequence, read N- to C-terminus: Elongation factor 2 (726 aa).

Positions 19 to 260 (DRIRNIGICA…MVIKHLPSPP (242 aa)) constitute a tr-type G domain. GTP is bound by residues 28–35 (AHIDHGKT), 94–98 (DTPGH), and 148–151 (NKVD). The residue at position 602 (His-602) is a Diphthamide.

It belongs to the TRAFAC class translation factor GTPase superfamily. Classic translation factor GTPase family. EF-G/EF-2 subfamily.

Its subcellular location is the cytoplasm. Functionally, catalyzes the GTP-dependent ribosomal translocation step during translation elongation. During this step, the ribosome changes from the pre-translocational (PRE) to the post-translocational (POST) state as the newly formed A-site-bound peptidyl-tRNA and P-site-bound deacylated tRNA move to the P and E sites, respectively. Catalyzes the coordinated movement of the two tRNA molecules, the mRNA and conformational changes in the ribosome. The protein is Elongation factor 2 (fusA) of Methanocaldococcus jannaschii (strain ATCC 43067 / DSM 2661 / JAL-1 / JCM 10045 / NBRC 100440) (Methanococcus jannaschii).